The primary structure comprises 424 residues: MLTDTLIQEFQDRNLISQITNEIDLKNILLHNKISLYCGFDITADSLHVGHILPLLCLRRFQNLGHRPVILMGGGTSLIGDPSFKLLERQLNSIELVHTWKQKITKQLSLFLKFNVGKNNALIVDNYEWFKNINVLTFLRDIGKHFSINQMIVRDAIQRRIKRLDQGISFTEFSYNLLQAYDFYFLNKQLDVILQIGGSDQWGNIISGIDLIRRLHKKRAYGITVPLLTKKDGRKFGKTELDTIWLDKMKTSPYKFYQYWMNISDSDIYSFLKMFTFLSLSEIKALKDTTKPTELNSVKKILAEYLTNLVHGSNEVRAIQRITSSLFSGKFSEMKETDFFQLEQDGMPSVQLYNSGNLQQLLVYSRLALSRSHAKSMIVSNSVRINNIIQNNPFYILCNRDKMYHKYTLLSRGKKNFCLLCWTK.

Position 37 (Tyr37) interacts with L-tyrosine. The short motif at 42-51 (ITADSLHVGH) is the 'HIGH' region element. The L-tyrosine site is built by Tyr175 and Gln179. A 'KMSKS' region motif is present at residues 235–239 (KFGKT). Lys238 provides a ligand contact to ATP. Residues 356-414 (GNLQQLLVYSRLALSRSHAKSMIVSNSVRINNIIQNNPFYILCNRDKMYHKYTLLSRGK) form the S4 RNA-binding domain.

The protein belongs to the class-I aminoacyl-tRNA synthetase family. TyrS type 1 subfamily. As to quaternary structure, homodimer.

The protein resides in the cytoplasm. It carries out the reaction tRNA(Tyr) + L-tyrosine + ATP = L-tyrosyl-tRNA(Tyr) + AMP + diphosphate + H(+). Catalyzes the attachment of tyrosine to tRNA(Tyr) in a two-step reaction: tyrosine is first activated by ATP to form Tyr-AMP and then transferred to the acceptor end of tRNA(Tyr). This chain is Tyrosine--tRNA ligase, found in Buchnera aphidicola subsp. Baizongia pistaciae (strain Bp).